We begin with the raw amino-acid sequence, 266 residues long: 5'-nucleotidase SurE (266 aa).

Asp-8, Asp-9, Ser-42, and Asn-98 together coordinate a divalent metal cation.

This sequence belongs to the SurE nucleotidase family. A divalent metal cation serves as cofactor.

The protein resides in the cytoplasm. It carries out the reaction a ribonucleoside 5'-phosphate + H2O = a ribonucleoside + phosphate. In terms of biological role, nucleotidase that shows phosphatase activity on nucleoside 5'-monophosphates. In Methanocaldococcus jannaschii (strain ATCC 43067 / DSM 2661 / JAL-1 / JCM 10045 / NBRC 100440) (Methanococcus jannaschii), this protein is 5'-nucleotidase SurE.